The sequence spans 245 residues: Exosome complex component RRP41 (245 aa).

Residue alanine 2 is modified to N-acetylalanine.

Belongs to the RNase PH family. In terms of assembly, component of the RNA exosome core complex (Exo-9), composed of EXOSC1, EXOSC2, EXOSC3, EXOSC4, EXOSC5, EXOSC6, EXOSC7, EXOSC8 and EXOSC9; within the complex interacts with EXOSC2, EXOSC7 and EXOSC9. The catalytically inactive RNA exosome core complex (Exo-9) associates with the catalytic subunit EXOSC10/RRP6. Exo-9 may associate with DIS3 to form the nucleolar exosome complex, or DIS3L to form the cytoplasmic exosome complex. Exo-9 is formed by a hexameric base ring consisting of the heterodimers EXOSC4-EXOSC9, EXOSC5-EXOSC8 and EXOSC6-EXOSC7, and a cap ring consisting of EXOSC1, EXOSC2 and EXOSC3. The RNA exosome complex associates with cofactors C1D/RRP47, MPHOSPH6/MPP6 and MTREX/MTR4. Interacts with DDX60. Interacts with DIS3; the interaction is direct.

Its subcellular location is the cytoplasm. The protein resides in the nucleus. The protein localises to the nucleolus. It localises to the nucleoplasm. Its function is as follows. Non-catalytic component of the RNA exosome complex which has 3'-&gt;5' exoribonuclease activity and participates in a multitude of cellular RNA processing and degradation events. In the nucleus, the RNA exosome complex is involved in proper maturation of stable RNA species such as rRNA, snRNA and snoRNA, in the elimination of RNA processing by-products and non-coding 'pervasive' transcripts, such as antisense RNA species and promoter-upstream transcripts (PROMPTs), and of mRNAs with processing defects, thereby limiting or excluding their export to the cytoplasm. The RNA exosome may be involved in Ig class switch recombination (CSR) and/or Ig variable region somatic hypermutation (SHM) by targeting AICDA deamination activity to transcribed dsDNA substrates. In the cytoplasm, the RNA exosome complex is involved in general mRNA turnover and specifically degrades inherently unstable mRNAs containing AU-rich elements (AREs) within their 3' untranslated regions, and in RNA surveillance pathways, preventing translation of aberrant mRNAs. It seems to be involved in degradation of histone mRNA. The catalytic inactive RNA exosome core complex of 9 subunits (Exo-9) is proposed to play a pivotal role in the binding and presentation of RNA for ribonucleolysis, and to serve as a scaffold for the association with catalytic subunits and accessory proteins or complexes. EXOSC4 binds to ARE-containing RNAs. This Homo sapiens (Human) protein is Exosome complex component RRP41 (EXOSC4).